The chain runs to 238 residues: Small ribosomal subunit protein uS2 (238 aa).

It belongs to the universal ribosomal protein uS2 family.

This is Small ribosomal subunit protein uS2 from Moorella thermoacetica (strain ATCC 39073 / JCM 9320).